Here is a 449-residue protein sequence, read N- to C-terminus: MKMIDIVKNKKVLVLGLAKSGESAARLLDKLGAIVTVNDGKPFEENPTAQSLLEDGIRVICGSHPLELLDEDFALMVKNPGIRYDNPMVEKAIGKGIPVWTEVELAYLVSDVPIVGITGSNGKTTTTTMIAEVLNAGKKPAKLCGNIGYPASSVAQTATAEDTLVMELSSFQLMGTESFHPHIAVVTNLIASHIDYHGTFEDYVAAKWMIQRQMTAEDFVVINFNQKEAKELAGQTKATVVPFSTQEVVDGAYLADGKLYFKGEYIMDADQIGVPGSHNVENALATIVVAKLLGVDQQAIQESLSAFGGVKHRLQFVGEINGVSFYNDSKSTNILATQKALSGFDNSKVILIAGGLDRGNEFDELVPDLVGLKKMVILGQSAPRVQRAADKAEVETIEALDIADATRKAFAIAEKGDIVLLSPANASWDMYANFEVRGDVFLQTFEELK.

Residue 119-125 (GSNGKTT) participates in ATP binding.

The protein belongs to the MurCDEF family.

It is found in the cytoplasm. The enzyme catalyses UDP-N-acetyl-alpha-D-muramoyl-L-alanine + D-glutamate + ATP = UDP-N-acetyl-alpha-D-muramoyl-L-alanyl-D-glutamate + ADP + phosphate + H(+). It participates in cell wall biogenesis; peptidoglycan biosynthesis. Cell wall formation. Catalyzes the addition of glutamate to the nucleotide precursor UDP-N-acetylmuramoyl-L-alanine (UMA). This Streptococcus suis (strain 98HAH33) protein is UDP-N-acetylmuramoylalanine--D-glutamate ligase.